We begin with the raw amino-acid sequence, 158 residues long: Large ribosomal subunit protein uL11 (158 aa).

The protein belongs to the universal ribosomal protein uL11 family. In terms of assembly, part of the ribosomal stalk of the 50S ribosomal subunit. Interacts with L10 and the large rRNA to form the base of the stalk. L10 forms an elongated spine to which L12 dimers bind in a sequential fashion forming a multimeric L10(L12)X complex.

Its function is as follows. Forms part of the ribosomal stalk which helps the ribosome interact with GTP-bound translation factors. The sequence is that of Large ribosomal subunit protein uL11 from Methanoregula boonei (strain DSM 21154 / JCM 14090 / 6A8).